A 284-amino-acid polypeptide reads, in one-letter code: Lipoyl synthase (284 aa).

7 residues coordinate [4Fe-4S] cluster: cysteine 34, cysteine 39, cysteine 45, cysteine 60, cysteine 64, cysteine 67, and serine 272. A Radical SAM core domain is found at 46–261 (FARRTATFMI…EEIGYKLGFK (216 aa)).

The protein belongs to the radical SAM superfamily. Lipoyl synthase family. The cofactor is [4Fe-4S] cluster.

It is found in the cytoplasm. It carries out the reaction [[Fe-S] cluster scaffold protein carrying a second [4Fe-4S](2+) cluster] + N(6)-octanoyl-L-lysyl-[protein] + 2 oxidized [2Fe-2S]-[ferredoxin] + 2 S-adenosyl-L-methionine + 4 H(+) = [[Fe-S] cluster scaffold protein] + N(6)-[(R)-dihydrolipoyl]-L-lysyl-[protein] + 4 Fe(3+) + 2 hydrogen sulfide + 2 5'-deoxyadenosine + 2 L-methionine + 2 reduced [2Fe-2S]-[ferredoxin]. The protein operates within protein modification; protein lipoylation via endogenous pathway; protein N(6)-(lipoyl)lysine from octanoyl-[acyl-carrier-protein]: step 2/2. Its function is as follows. Catalyzes the radical-mediated insertion of two sulfur atoms into the C-6 and C-8 positions of the octanoyl moiety bound to the lipoyl domains of lipoate-dependent enzymes, thereby converting the octanoylated domains into lipoylated derivatives. The chain is Lipoyl synthase from Caldanaerobacter subterraneus subsp. tengcongensis (strain DSM 15242 / JCM 11007 / NBRC 100824 / MB4) (Thermoanaerobacter tengcongensis).